The chain runs to 706 residues: Transferrin-binding protein B (706 aa).

The signal sequence occupies residues Met1 to Ala20. Residue Cys21 is the site of N-palmitoyl cysteine attachment. Cys21 carries S-diacylglycerol cysteine lipidation. 2 disordered regions span residues Gly26–Val92 and Gly384–Gly412. A compositionally biased stretch (gly residues) spans Gly42 to Gly51. Residues Ser389–Glu410 are compositionally biased toward basic and acidic residues.

The protein belongs to the TbpB family.

It localises to the cell outer membrane. The protein localises to the cell surface. In terms of biological role, moraxella acquires iron by extracting it from serum transferrin (TF) in its human host. Acts as a transferrin receptor and is required for transferrin utilization. This is Transferrin-binding protein B from Moraxella catarrhalis (Branhamella catarrhalis).